The following is a 144-amino-acid chain: Putative pre-16S rRNA nuclease (144 aa).

Belongs to the YqgF nuclease family.

Its subcellular location is the cytoplasm. Could be a nuclease involved in processing of the 5'-end of pre-16S rRNA. This is Putative pre-16S rRNA nuclease from Wigglesworthia glossinidia brevipalpis.